The primary structure comprises 89 residues: MAITQERKNQLISEFKTHESDTGSPEVQIAILTDSINNLNEHLRTHKKDHHSRRGLLKMVGKRRNLLTYLRNKDVTRYRELINKLGLRR.

A compositionally biased stretch (basic and acidic residues) spans 1-21; it reads MAITQERKNQLISEFKTHESD. Residues 1 to 23 are disordered; that stretch reads MAITQERKNQLISEFKTHESDTG.

The protein belongs to the universal ribosomal protein uS15 family. As to quaternary structure, part of the 30S ribosomal subunit. Forms a bridge to the 50S subunit in the 70S ribosome, contacting the 23S rRNA.

Its function is as follows. One of the primary rRNA binding proteins, it binds directly to 16S rRNA where it helps nucleate assembly of the platform of the 30S subunit by binding and bridging several RNA helices of the 16S rRNA. Functionally, forms an intersubunit bridge (bridge B4) with the 23S rRNA of the 50S subunit in the ribosome. The protein is Small ribosomal subunit protein uS15 of Bacillus velezensis (strain DSM 23117 / BGSC 10A6 / LMG 26770 / FZB42) (Bacillus amyloliquefaciens subsp. plantarum).